Consider the following 277-residue polypeptide: F420-dependent methylenetetrahydromethanopterin dehydrogenase (277 aa).

Positions 249–277 (EKATDSVSRKPHGADGKRLNKTKLMEKPE) are disordered.

The protein belongs to the MTD family.

It catalyses the reaction 5,10-methylenetetrahydromethanopterin + oxidized coenzyme F420-(gamma-L-Glu)(n) + 2 H(+) = 5,10-methenyl-5,6,7,8-tetrahydromethanopterin + reduced coenzyme F420-(gamma-L-Glu)(n). It participates in one-carbon metabolism; methanogenesis from CO(2); 5,10-methylene-5,6,7,8-tetrahydromethanopterin from 5,10-methenyl-5,6,7,8-tetrahydromethanopterin (coenzyme F420 route): step 1/1. Functionally, catalyzes the reversible reduction of methenyl-H(4)MPT(+) to methylene-H(4)MPT. The polypeptide is F420-dependent methylenetetrahydromethanopterin dehydrogenase (Methanococcus aeolicus (strain ATCC BAA-1280 / DSM 17508 / OCM 812 / Nankai-3)).